The following is a 530-amino-acid chain: Phosphoenolpyruvate carboxykinase (ATP) (530 aa).

R57, Y193, and K199 together coordinate substrate. ATP contacts are provided by residues K199, H218, and 234–242 (GLSGTGKTT). 2 residues coordinate Mn(2+): K199 and H218. D255 lines the Mn(2+) pocket. ATP-binding residues include E283, R320, and T445. A substrate-binding site is contributed by R320.

This sequence belongs to the phosphoenolpyruvate carboxykinase (ATP) family. It depends on Mn(2+) as a cofactor.

The protein localises to the cytoplasm. It carries out the reaction oxaloacetate + ATP = phosphoenolpyruvate + ADP + CO2. Its pathway is carbohydrate biosynthesis; gluconeogenesis. Its function is as follows. Involved in the gluconeogenesis. Catalyzes the conversion of oxaloacetate (OAA) to phosphoenolpyruvate (PEP) through direct phosphoryl transfer between the nucleoside triphosphate and OAA. The polypeptide is Phosphoenolpyruvate carboxykinase (ATP) (Leptospira biflexa serovar Patoc (strain Patoc 1 / Ames)).